The sequence spans 274 residues: Chemotaxis protein methyltransferase 1 (274 aa).

The 274-residue stretch at Met-1–Lys-274 folds into the CheR-type methyltransferase domain. S-adenosyl-L-methionine-binding positions include Asn-72, Thr-74, Arg-78, Glu-115, Asp-144, Asn-200 to Leu-201, and Arg-217 to Asn-218.

The catalysed reaction is L-glutamyl-[protein] + S-adenosyl-L-methionine = [protein]-L-glutamate 5-O-methyl ester + S-adenosyl-L-homocysteine. Its function is as follows. Methylation of the membrane-bound methyl-accepting chemotaxis proteins (MCP) to form gamma-glutamyl methyl ester residues in MCP. The chain is Chemotaxis protein methyltransferase 1 (cheR1) from Pseudomonas aeruginosa (strain ATCC 15692 / DSM 22644 / CIP 104116 / JCM 14847 / LMG 12228 / 1C / PRS 101 / PAO1).